Here is a 309-residue protein sequence, read N- to C-terminus: Low density lipoprotein receptor adapter protein 1-B (309 aa).

Residues 41 to 195 (LLEGMLFHLK…SDGEGASSSQ (155 aa)) enclose the PID domain. Positions 179–201 (DKREKSGSDGEGASSSQSDGSSS) are disordered. Residues 189–201 (EGASSSQSDGSSS) show a composition bias toward low complexity. The Clathrin box signature appears at 213-217 (LLDFE). The tract at residues 250–277 (WELDDGLDEAFARLAESRTNPQVLDIGL) is AP-2 complex binding. A [DE]-X(1,2)-F-X-X-[FL]-X-X-X-R motif motif is present at residues 258–267 (EAFARLAESR).

As to quaternary structure, interacts (via PID domain) with ldlr (via NPXY motif). Binds to soluble clathrin trimers and to the adapter protein complex 2 (AP-2, beta 2 subunit). Binds to phosphoinositides, which regulate clathrin bud assembly at the cell surface. Interacts with the VLDL receptor (vldlr). Interacts with the vitellogenin receptor. As to expression, expressed at high level during oogenesis and embryogenesis. Found at low level in the adult liver and spleen. Found at very low level in testis and heart. Not found in the oocyte vegetal cortex.

Its subcellular location is the cytoplasm. Functionally, adapter protein (clathrin-associated sorting protein (CLASP)) required for efficient endocytosis of the LDL receptor (LDLR). Also involved in the vitellogenin receptor mediated endocytosis of nutrients during oogenesis. The chain is Low density lipoprotein receptor adapter protein 1-B from Xenopus laevis (African clawed frog).